Reading from the N-terminus, the 371-residue chain is Ribosomal RNA small subunit methyltransferase H (371 aa).

S-adenosyl-L-methionine contacts are provided by residues 92 to 94, aspartate 111, tyrosine 138, aspartate 159, and glutamine 166; that span reads GGH.

It belongs to the methyltransferase superfamily. RsmH family.

Its subcellular location is the cytoplasm. It carries out the reaction cytidine(1402) in 16S rRNA + S-adenosyl-L-methionine = N(4)-methylcytidine(1402) in 16S rRNA + S-adenosyl-L-homocysteine + H(+). In terms of biological role, specifically methylates the N4 position of cytidine in position 1402 (C1402) of 16S rRNA. The protein is Ribosomal RNA small subunit methyltransferase H of Mycolicibacterium gilvum (strain PYR-GCK) (Mycobacterium gilvum (strain PYR-GCK)).